The chain runs to 377 residues: Actin-related protein 2/3 complex subunit 1 (377 aa).

5 WD repeats span residues Ile-9 to Ala-48, Asp-53 to Gln-92, Arg-98 to Lys-139, Pro-144 to Lys-183, and Pro-203 to Arg-242. The segment at Gly-293–Gly-313 is disordered. One copy of the WD 6 repeat lies at Val-342–Thr-376.

Belongs to the WD repeat ARPC1 family. Component of the Arp2/3 complex composed of arp2, act2, arc1/p41-ARC, arc2/p34-ARC, arc3/p21-ARC, arc4/p20-ARC and arc5/p16-ARC.

It localises to the cytoplasm. Its subcellular location is the cytoskeleton. It is found in the actin patch. Functionally, functions as a component of the Arp2/3 complex which is involved in regulation of actin polymerization and together with an activating nucleation-promoting factor (NPF) mediates the formation of branched actin networks. The polypeptide is Actin-related protein 2/3 complex subunit 1 (arc1) (Schizosaccharomyces pombe (strain 972 / ATCC 24843) (Fission yeast)).